Reading from the N-terminus, the 289-residue chain is Oxaloacetate decarboxylase (289 aa).

Residue Ser-47 participates in substrate binding. Asp-85 provides a ligand contact to Mg(2+). 2 residues coordinate substrate: Arg-156 and His-232.

Belongs to the isocitrate lyase/PEP mutase superfamily. Oxaloacetate decarboxylase family. As to quaternary structure, homotetramer; dimer of dimers. The cofactor is Mg(2+).

It carries out the reaction oxaloacetate + H(+) = pyruvate + CO2. Its function is as follows. Catalyzes the decarboxylation of oxaloacetate into pyruvate. Seems to play a role in maintaining cellular concentrations of bicarbonate and pyruvate. The sequence is that of Oxaloacetate decarboxylase from Rhodopseudomonas palustris (strain BisA53).